A 563-amino-acid chain; its full sequence is Ras and Rab interactor-like protein (563 aa).

A disordered region spans residues 181–208 (GWGTETPQQTEPETGQKYSLAPRKPTPH). A compositionally biased stretch (low complexity) spans 184–196 (TETPQQTEPETGQ). The VPS9 domain maps to 381–518 (AQELRRLRRR…IAHYQPDTGR (138 aa)). The tract at residues 539–563 (TLHQQAQPTAQANQPFEEPWAIGDP) is disordered. A compositionally biased stretch (low complexity) spans 542 to 553 (QQAQPTAQANQP).

In terms of assembly, interacts with RAB5A, RAB22A and MUSK. Detected in thymus and spleen (at protein level). Detected in lung, liver, kidney, spleen, thymus and skeletal muscle.

It is found in the cell projection. It localises to the ruffle. The protein resides in the cytoplasmic vesicle. In terms of biological role, guanine nucleotide exchange factor (GEF) for RAB5A and RAB22A that activates RAB5A and RAB22A by exchanging bound GDP for free GTP. Plays a role in endocytosis via its role in activating Rab family members. In Mus musculus (Mouse), this protein is Ras and Rab interactor-like protein (Rinl).